A 619-amino-acid chain; its full sequence is Schlafen family member 12-like (619 aa).

The helical transmembrane segment at 598 to 618 threads the bilayer; it reads IFLFVCLFRFCLFVCLFVFFL.

This sequence belongs to the Schlafen family.

The protein resides in the membrane. This Pongo abelii (Sumatran orangutan) protein is Schlafen family member 12-like (SLFN12L).